Consider the following 202-residue polypeptide: Putative 3-methyladenine DNA glycosylase (202 aa).

This sequence belongs to the DNA glycosylase MPG family.

The polypeptide is Putative 3-methyladenine DNA glycosylase (Staphylococcus aureus (strain bovine RF122 / ET3-1)).